A 379-amino-acid chain; its full sequence is Actin, cytoplasmic (379 aa).

The protein belongs to the actin family.

Its subcellular location is the cytoplasm. It is found in the cytoskeleton. It carries out the reaction ATP + H2O = ADP + phosphate + H(+). Functionally, actins are highly conserved proteins that are involved in various types of cell motility and are ubiquitously expressed in all eukaryotic cells. The protein is Actin, cytoplasmic of Euplotes crassus.